A 420-amino-acid chain; its full sequence is Exodeoxyribonuclease 7 large subunit (420 aa).

The protein belongs to the XseA family. As to quaternary structure, heterooligomer composed of large and small subunits.

Its subcellular location is the cytoplasm. It catalyses the reaction Exonucleolytic cleavage in either 5'- to 3'- or 3'- to 5'-direction to yield nucleoside 5'-phosphates.. Its function is as follows. Bidirectionally degrades single-stranded DNA into large acid-insoluble oligonucleotides, which are then degraded further into small acid-soluble oligonucleotides. The protein is Exodeoxyribonuclease 7 large subunit of Helicobacter pylori (strain ATCC 700392 / 26695) (Campylobacter pylori).